We begin with the raw amino-acid sequence, 382 residues long: Putative acetyl-CoA C-acetyltransferase VraB (382 aa).

Cysteine 86 functions as the Acyl-thioester intermediate in the catalytic mechanism. The active-site Proton acceptor is the histidine 338.

Belongs to the thiolase-like superfamily. Thiolase family.

This is Putative acetyl-CoA C-acetyltransferase VraB (vraB) from Staphylococcus epidermidis (strain ATCC 35984 / DSM 28319 / BCRC 17069 / CCUG 31568 / BM 3577 / RP62A).